Reading from the N-terminus, the 232-residue chain is Ubiquinone biosynthesis O-methyltransferase (232 aa).

The S-adenosyl-L-methionine site is built by arginine 36, glycine 55, aspartate 76, and methionine 120.

Belongs to the methyltransferase superfamily. UbiG/COQ3 family.

It carries out the reaction a 3-demethylubiquinol + S-adenosyl-L-methionine = a ubiquinol + S-adenosyl-L-homocysteine + H(+). The catalysed reaction is a 3-(all-trans-polyprenyl)benzene-1,2-diol + S-adenosyl-L-methionine = a 2-methoxy-6-(all-trans-polyprenyl)phenol + S-adenosyl-L-homocysteine + H(+). It participates in cofactor biosynthesis; ubiquinone biosynthesis. In terms of biological role, O-methyltransferase that catalyzes the 2 O-methylation steps in the ubiquinone biosynthetic pathway. In Burkholderia ambifaria (strain MC40-6), this protein is Ubiquinone biosynthesis O-methyltransferase.